Reading from the N-terminus, the 911-residue chain is Protein dead ringer (911 aa).

Disordered regions lie at residues 1 to 44 (MQLR…DCDS), 67 to 87 (SGGG…LSHH), and 172 to 274 (HVTS…QNNG). Residues 19–34 (IERDSDLGDDLSHGDR) show a composition bias toward basic and acidic residues. Position 30 is a phosphoserine (Ser-30). Phosphothreonine is present on Thr-35. Position 44 is a phosphoserine (Ser-44). Residues 174-201 (TSSPSGGNGSSYNGGTTPTNSSNSNATT) show a composition bias toward low complexity. Positions 202 to 231 (NGGGTAGPGGTGGSGGGGGGGGGGGGGVGG) are enriched in gly residues. The segment covering 252 to 273 (AANSASNSSTSSEASNSSQQNN) has biased composition (low complexity). Residues 293–385 (DPKRKEFLDD…YLYPYECEKK (93 aa)) form the ARID domain. Disordered stretches follow at residues 501-633 (GMPP…VGSG), 662-775 (PSMG…GKLN), and 826-877 (QSET…DQDM). Residues 512-550 (HQQQHSQQQQQQQHHHQQQQQQQSQQQHHLQQQRQRSQS) are compositionally biased toward low complexity. Over residues 570–600 (HNNNSPPGSAHTSPQQREALNLSDSPPNLTN) the composition is skewed to polar residues. Phosphoserine is present on residues Ser-592 and Ser-594. Residues 601–621 (IKREREREPTPEPVDQDDKFV) show a composition bias toward basic and acidic residues. Ser-720 carries the phosphoserine modification. The region spanning 731 to 825 (TTGGSVGHRH…GVLVANVPLS (95 aa)) is the REKLES domain. Residues 737–751 (GHRHSSPVSTKKKGG) show a composition bias toward basic residues. The span at 841–853 (TVEEEKDEEEEEE) shows a compositional bias: acidic residues. Over residues 854 to 870 (PKAAEEESHRSPVKQEN) the composition is skewed to basic and acidic residues.

As to expression, present in the pharyngeal muscles, hindgut epithelium, amnioserosa, ring gland, midgut-hindgut junction, posterior region of each brain lobe, longitudinal glial cells of the CNS and the salivary gland duct of germ-band retracted embryos.

Its subcellular location is the nucleus. Its function is as follows. Transcription factor which is a downstream target of gcm and repo. Directly or indirectly activates the transcription of locos and pros, which are essential for the development of some glial cells. Plays an essential role in defining the cell shape and migration characteristics of longitudinal glia that enable them to establish a normal axon scaffold. In Drosophila melanogaster (Fruit fly), this protein is Protein dead ringer (retn).